The sequence spans 239 residues: Probable methylthioribulose-1-phosphate dehydratase (239 aa).

Substrate is bound at residue C100. Residues H118 and H120 each contribute to the Zn(2+) site. E141 serves as the catalytic Proton donor/acceptor. Zn(2+) is bound at residue H197.

It belongs to the aldolase class II family. MtnB subfamily. Zn(2+) serves as cofactor.

Its subcellular location is the cytoplasm. The enzyme catalyses 5-(methylsulfanyl)-D-ribulose 1-phosphate = 5-methylsulfanyl-2,3-dioxopentyl phosphate + H2O. Its pathway is amino-acid biosynthesis; L-methionine biosynthesis via salvage pathway; L-methionine from S-methyl-5-thio-alpha-D-ribose 1-phosphate: step 2/6. In terms of biological role, catalyzes the dehydration of methylthioribulose-1-phosphate (MTRu-1-P) into 2,3-diketo-5-methylthiopentyl-1-phosphate (DK-MTP-1-P). This is Probable methylthioribulose-1-phosphate dehydratase from Leishmania major.